A 70-amino-acid polypeptide reads, in one-letter code: Conotoxin TxMMSK-02 (70 aa).

The first 20 residues, 1–20, serve as a signal peptide directing secretion; the sequence is MMSKLGALLTICLLLFSLTA. Residues 21–53 constitute a propeptide that is removed on maturation; sequence VPLDGDQHADQPAQRLQDRIPTEDHPLFDPNKR. 3 disulfides stabilise this stretch: C54-C68, C55-C64, and C60-C67. A 4-hydroxyproline modification is found at P66. Y69 bears the Tyrosine amide mark.

It belongs to the conotoxin M superfamily. As to expression, expressed by the venom duct.

It localises to the secreted. The chain is Conotoxin TxMMSK-02 from Conus textile (Cloth-of-gold cone).